The following is a 98-amino-acid chain: Cell division topological specificity factor (98 aa).

It belongs to the MinE family.

In terms of biological role, prevents the cell division inhibition by proteins MinC and MinD at internal division sites while permitting inhibition at polar sites. This ensures cell division at the proper site by restricting the formation of a division septum at the midpoint of the long axis of the cell. The protein is Cell division topological specificity factor of Methylorubrum populi (strain ATCC BAA-705 / NCIMB 13946 / BJ001) (Methylobacterium populi).